A 353-amino-acid chain; its full sequence is Photosystem II D2 protein (353 aa).

N-acetylthreonine is present on Thr2. The residue at position 2 (Thr2) is a Phosphothreonine. The helical transmembrane segment at 41–61 (CAYFALGGWFTGTTFVTSWYT) threads the bilayer. Residue His118 coordinates chlorophyll a. A helical membrane pass occupies residues 125 to 141 (GFMLRQFELARSVQLRP). Residues Gln130 and Asn143 each coordinate pheophytin a. The helical transmembrane segment at 153 to 166 (VFVSVFLIYPLGQS) threads the bilayer. A chlorophyll a-binding site is contributed by His198. The chain crosses the membrane as a helical span at residues 208-228 (AALLCAIHGATVENTLFEDGD). A plastoquinone contacts are provided by His215 and Phe262. His215 contacts Fe cation. His269 contributes to the Fe cation binding site. A helical transmembrane segment spans residues 279 to 295 (GLWMSALGVVGLALNLR).

Belongs to the reaction center PufL/M/PsbA/D family. As to quaternary structure, PSII is composed of 1 copy each of membrane proteins PsbA, PsbB, PsbC, PsbD, PsbE, PsbF, PsbH, PsbI, PsbJ, PsbK, PsbL, PsbM, PsbT, PsbX, PsbY, PsbZ, Psb30/Ycf12, at least 3 peripheral proteins of the oxygen-evolving complex and a large number of cofactors. It forms dimeric complexes. It depends on The D1/D2 heterodimer binds P680, chlorophylls that are the primary electron donor of PSII, and subsequent electron acceptors. It shares a non-heme iron and each subunit binds pheophytin, quinone, additional chlorophylls, carotenoids and lipids. There is also a Cl(-1) ion associated with D1 and D2, which is required for oxygen evolution. The PSII complex binds additional chlorophylls, carotenoids and specific lipids. as a cofactor.

Its subcellular location is the plastid. It localises to the chloroplast thylakoid membrane. The enzyme catalyses 2 a plastoquinone + 4 hnu + 2 H2O = 2 a plastoquinol + O2. Functionally, photosystem II (PSII) is a light-driven water:plastoquinone oxidoreductase that uses light energy to abstract electrons from H(2)O, generating O(2) and a proton gradient subsequently used for ATP formation. It consists of a core antenna complex that captures photons, and an electron transfer chain that converts photonic excitation into a charge separation. The D1/D2 (PsbA/PsbD) reaction center heterodimer binds P680, the primary electron donor of PSII as well as several subsequent electron acceptors. D2 is needed for assembly of a stable PSII complex. This Aethionema grandiflorum (Persian stone-cress) protein is Photosystem II D2 protein.